Reading from the N-terminus, the 429-residue chain is MQNYSKSEKAFKEAKKVLPGGVNSPVRAFNSVDASPVFMDHGKGAYITDVDGNEYIDYVLSWGPLILGHADPAVVNAITKAALKGTSFGTPTEIETELAKLVIERVPSIEIVRMVSSGTEATMSAIRLARGYTKREKILKFEGSYHGHGDSLLIKAGSGVATLGLPDSPGVTKGLAADTITVPYNDIEGAELAFQKYGEEIAAVIVEPVAGNMGVVPPIDGFLEGLRELTTKFGSLLIFDEVMTGFRVDYYSAQGYYVVTPDLTCLGKVIGGGLPVGAYGGKKEIMEQIAPAGSIYQAGTLSGNPLAMNAGFETVRQLTPQHYDVFRTLIKRMEEGLTEISARRQVPLSINKAGSMFGFFFTDQKVINFDTAKTSNLEFFRNYYREMLGQGIFLPPSQFEGVFISTMHTEKEIDKTLEAFDTTCKILRG.

At K268 the chain carries N6-(pyridoxal phosphate)lysine.

This sequence belongs to the class-III pyridoxal-phosphate-dependent aminotransferase family. HemL subfamily. Homodimer. The cofactor is pyridoxal 5'-phosphate.

It localises to the cytoplasm. The catalysed reaction is (S)-4-amino-5-oxopentanoate = 5-aminolevulinate. Its pathway is porphyrin-containing compound metabolism; protoporphyrin-IX biosynthesis; 5-aminolevulinate from L-glutamyl-tRNA(Glu): step 2/2. In Listeria monocytogenes serotype 4b (strain F2365), this protein is Glutamate-1-semialdehyde 2,1-aminomutase 1.